Reading from the N-terminus, the 66-residue chain is MQRGKVKWFNNEKGYGFIEVEGGSDVFVHFTAIQGEGFKTLEEGQEVSFEIVQGNRGPQAANVVKL.

A CSD domain is found at 4–63; that stretch reads GKVKWFNNEKGYGFIEVEGGSDVFVHFTAIQGEGFKTLEEGQEVSFEIVQGNRGPQAANV.

As to quaternary structure, homodimer.

It is found in the cytoplasm. In terms of biological role, affects cell viability at low temperatures. The protein is Cold shock protein CspB (cspB) of Bacillus caldolyticus.